Here is a 965-residue protein sequence, read N- to C-terminus: Glycine dehydrogenase (decarboxylating) 1 (965 aa).

Lysine 713 carries the N6-(pyridoxal phosphate)lysine modification.

The protein belongs to the GcvP family. In terms of assembly, the glycine cleavage system is composed of four proteins: P, T, L and H. Requires pyridoxal 5'-phosphate as cofactor.

The catalysed reaction is N(6)-[(R)-lipoyl]-L-lysyl-[glycine-cleavage complex H protein] + glycine + H(+) = N(6)-[(R)-S(8)-aminomethyldihydrolipoyl]-L-lysyl-[glycine-cleavage complex H protein] + CO2. Its function is as follows. The glycine cleavage system catalyzes the degradation of glycine. The P protein binds the alpha-amino group of glycine through its pyridoxal phosphate cofactor; CO(2) is released and the remaining methylamine moiety is then transferred to the lipoamide cofactor of the H protein. The sequence is that of Glycine dehydrogenase (decarboxylating) 1 from Colwellia psychrerythraea (strain 34H / ATCC BAA-681) (Vibrio psychroerythus).